The following is a 175-amino-acid chain: Large ribosomal subunit protein uL10 (175 aa).

The protein belongs to the universal ribosomal protein uL10 family. In terms of assembly, part of the ribosomal stalk of the 50S ribosomal subunit. The N-terminus interacts with L11 and the large rRNA to form the base of the stalk. The C-terminus forms an elongated spine to which L12 dimers bind in a sequential fashion forming a multimeric L10(L12)X complex.

Forms part of the ribosomal stalk, playing a central role in the interaction of the ribosome with GTP-bound translation factors. This Cyanothece sp. (strain PCC 7425 / ATCC 29141) protein is Large ribosomal subunit protein uL10.